The chain runs to 57 residues: Large ribosomal subunit protein bL32B (57 aa).

Belongs to the bacterial ribosomal protein bL32 family.

The protein is Large ribosomal subunit protein bL32B (rpmF2) of Listeria innocua serovar 6a (strain ATCC BAA-680 / CLIP 11262).